Reading from the N-terminus, the 560-residue chain is Ribonuclease J 1 (560 aa).

Zn(2+)-binding residues include His-76, His-78, Asp-80, His-81, His-144, and Asp-166. A substrate-binding site is contributed by 366 to 370 (HTSGH). His-392 is a Zn(2+) binding site.

This sequence belongs to the metallo-beta-lactamase superfamily. RNA-metabolizing metallo-beta-lactamase-like family. Bacterial RNase J subfamily. Homodimer, may be a subunit of the RNA degradosome. Requires Zn(2+) as cofactor.

It is found in the cytoplasm. In terms of biological role, an RNase that has 5'-3' exonuclease and possibly endonuclease activity. Involved in maturation of rRNA and in some organisms also mRNA maturation and/or decay. Has an overlapping but not completely redundant role with RNase J2 in the decay of mRNA. The chain is Ribonuclease J 1 from Streptococcus pyogenes serotype M3 (strain ATCC BAA-595 / MGAS315).